The following is a 434-amino-acid chain: Glutamate-1-semialdehyde 2,1-aminomutase (434 aa).

Residue Lys265 is modified to N6-(pyridoxal phosphate)lysine.

This sequence belongs to the class-III pyridoxal-phosphate-dependent aminotransferase family. HemL subfamily. As to quaternary structure, homodimer. Pyridoxal 5'-phosphate is required as a cofactor.

It localises to the cytoplasm. The catalysed reaction is (S)-4-amino-5-oxopentanoate = 5-aminolevulinate. It functions in the pathway porphyrin-containing compound metabolism; protoporphyrin-IX biosynthesis; 5-aminolevulinate from L-glutamyl-tRNA(Glu): step 2/2. In Ruminiclostridium cellulolyticum (strain ATCC 35319 / DSM 5812 / JCM 6584 / H10) (Clostridium cellulolyticum), this protein is Glutamate-1-semialdehyde 2,1-aminomutase.